Here is a 500-residue protein sequence, read N- to C-terminus: Glycerol kinase (500 aa).

T12 contacts ADP. T12, T13, and S14 together coordinate ATP. Sn-glycerol 3-phosphate is bound at residue T12. R16 lines the ADP pocket. Residues R82, E83, Y135, and D245 each coordinate sn-glycerol 3-phosphate. Residues R82, E83, Y135, D245, and Q246 each contribute to the glycerol site. Residues T267 and G310 each contribute to the ADP site. Residues T267, G310, Q314, and G411 each contribute to the ATP site. Residues G411 and N415 each coordinate ADP.

This sequence belongs to the FGGY kinase family. As to quaternary structure, homotetramer and homodimer (in equilibrium).

It catalyses the reaction glycerol + ATP = sn-glycerol 3-phosphate + ADP + H(+). It functions in the pathway polyol metabolism; glycerol degradation via glycerol kinase pathway; sn-glycerol 3-phosphate from glycerol: step 1/1. Activated by phosphorylation and inhibited by fructose 1,6-bisphosphate (FBP). In terms of biological role, key enzyme in the regulation of glycerol uptake and metabolism. Catalyzes the phosphorylation of glycerol to yield sn-glycerol 3-phosphate. The sequence is that of Glycerol kinase from Clostridium perfringens (strain 13 / Type A).